Consider the following 404-residue polypeptide: Probable tRNA sulfurtransferase (404 aa).

Residues 60-165 (QPIVEALKLV…DEAAYISYEE (106 aa)) enclose the THUMP domain. ATP-binding positions include 183 to 184 (ML), 208 to 209 (HF), Arg-265, Gly-287, and Gln-296.

Belongs to the ThiI family.

It is found in the cytoplasm. The enzyme catalyses [ThiI sulfur-carrier protein]-S-sulfanyl-L-cysteine + a uridine in tRNA + 2 reduced [2Fe-2S]-[ferredoxin] + ATP + H(+) = [ThiI sulfur-carrier protein]-L-cysteine + a 4-thiouridine in tRNA + 2 oxidized [2Fe-2S]-[ferredoxin] + AMP + diphosphate. The catalysed reaction is [ThiS sulfur-carrier protein]-C-terminal Gly-Gly-AMP + S-sulfanyl-L-cysteinyl-[cysteine desulfurase] + AH2 = [ThiS sulfur-carrier protein]-C-terminal-Gly-aminoethanethioate + L-cysteinyl-[cysteine desulfurase] + A + AMP + 2 H(+). It functions in the pathway cofactor biosynthesis; thiamine diphosphate biosynthesis. Functionally, catalyzes the ATP-dependent transfer of a sulfur to tRNA to produce 4-thiouridine in position 8 of tRNAs, which functions as a near-UV photosensor. Also catalyzes the transfer of sulfur to the sulfur carrier protein ThiS, forming ThiS-thiocarboxylate. This is a step in the synthesis of thiazole, in the thiamine biosynthesis pathway. The sulfur is donated as persulfide by IscS. This Streptococcus pyogenes serotype M12 (strain MGAS2096) protein is Probable tRNA sulfurtransferase.